Here is a 316-residue protein sequence, read N- to C-terminus: L-lactate dehydrogenase 3 (316 aa).

Positions 16, 37, 42, and 68 each coordinate NAD(+). Arginine 91 is a substrate binding site. NAD(+) contacts are provided by residues serine 104, alanine 121–asparagine 123, and threonine 146. A substrate-binding site is contributed by asparagine 123–aspartate 126. Aspartate 151–arginine 154 contacts substrate. The beta-D-fructose 1,6-bisphosphate site is built by arginine 156 and histidine 171. Histidine 178 acts as the Proton acceptor in catalysis. Threonine 233 serves as a coordination point for substrate.

It belongs to the LDH/MDH superfamily. LDH family. In terms of assembly, homotetramer.

Its subcellular location is the cytoplasm. It catalyses the reaction (S)-lactate + NAD(+) = pyruvate + NADH + H(+). The protein operates within fermentation; pyruvate fermentation to lactate; (S)-lactate from pyruvate: step 1/1. Allosterically activated by fructose 1,6-bisphosphate (FBP). In terms of biological role, catalyzes the conversion of lactate to pyruvate. The protein is L-lactate dehydrogenase 3 of Bacillus cereus (strain ATCC 10987 / NRS 248).